Here is a 766-residue protein sequence, read N- to C-terminus: Hypoxia-inducible factor 1-alpha (766 aa).

A disordered region spans residues methionine 1–alanine 26. Residues proline 7–alanine 26 show a composition bias toward basic and acidic residues. Positions arginine 17–arginine 70 constitute a bHLH domain. 2 consecutive PAS domains span residues glutamate 82 to lysine 159 and proline 230 to glycine 300. Residues threonine 304 to isoleucine 347 enclose the PAC domain. The tract at residues aspartate 361–leucine 383 is disordered. At proline 426 the chain carries 4-hydroxyproline. The disordered stretch occupies residues aspartate 475 to serine 509. Polar residues predominate over residues valine 479–valine 489. The segment covering serine 490 to serine 503 has biased composition (low complexity). At proline 559 the chain carries 4-hydroxyproline. Residues leucine 718 to isoleucine 721 carry the Nuclear localization signal motif. Asparagine 743 is subject to (3S)-3-hydroxyasparagine.

Efficient DNA binding requires heterodimerization of an alpha and a beta/ARNT subunit. In normoxia, is hydroxylated on Pro-426 and Pro-559. The hydroxylated prolines promote interaction with VHL, initiating rapid ubiquitination and subsequent proteasomal degradation. Under hypoxia, proline hydroxylation is impaired and ubiquitination is attenuated, resulting in stabilization. In terms of processing, in normoxia, is hydroxylated on Asn-743, thus abrogating interaction with CREBBP and EP300 and preventing transcriptional activation. Post-translationally, the iron and 2-oxoglutarate dependent 3-hydroxylation of asparagine is (S) stereospecific within HIF CTAD domains.

The protein resides in the cytoplasm. It is found in the nucleus. Its subcellular location is the nucleus speckle. With respect to regulation, induced by reactive oxygen species (ROS). Functionally, functions as a master transcriptional regulator of the adaptive response to hypoxia. Under hypoxic conditions, activates the transcription of over 40 genes, including erythropoietin, glucose transporters, glycolytic enzymes, vascular endothelial growth factor, HILPDA, and other genes whose protein products increase oxygen delivery or facilitate metabolic adaptation to hypoxia. Plays an essential role in embryonic vascularization, tumor angiogenesis and pathophysiology of ischemic disease. This Oncorhynchus mykiss (Rainbow trout) protein is Hypoxia-inducible factor 1-alpha (hif1a).